Reading from the N-terminus, the 472-residue chain is MSPHENPSVETRTESDTFGPIEVPAHRYWGAQTQRSIQNFKIGTERQPAPLVHALGIVKQAAALVNKDLGGLDPKIADAIAESAAEVVAGKHDDEFPLVVWQTGSGTQSNMNANEVIASLANERLGGKRGGKSPVHPNDHCNRGQSSNDTFPTAMHIAVAREVQERLLPALSHLHTALDAKAKEFESIVKIGRTHLQDATPVSLGQEFSGYAAQVALGGARIAATLPGVLALAQGGTAVGTGLNAHPEFAERFAAKVAELTGLPFTSAENKFEALATHDALVFLQGALTALASGLFKIANDIRLLGSGPRSGLGELSLPENEPGSSIMPGKVNPTQCEALTMVCAQVVGNGTTVSFAGSQGHFELNVFKPVIANAVLQSVRILADASVSFTDNCVVGIKANTDRISDLMSRSLMLVTALAPSIGYDKAAEIAKTAHKNGTTLKEEALRLGYVTDEEFERVVRPETMLAPSAE.

Residues Met-1–Pro-20 are disordered. Substrate contacts are provided by residues Ser-105–Thr-107, His-136–Asp-139, Ser-146–Asn-148, and Thr-194. The disordered stretch occupies residues Gly-127 to Asp-149. The active-site Proton donor/acceptor is His-195. Ser-325 is an active-site residue. Substrate-binding positions include Ser-326 and Lys-331–Asn-333.

It belongs to the class-II fumarase/aspartase family. Fumarase subfamily. As to quaternary structure, homotetramer.

The protein resides in the cytoplasm. The enzyme catalyses (S)-malate = fumarate + H2O. The protein operates within carbohydrate metabolism; tricarboxylic acid cycle; (S)-malate from fumarate: step 1/1. In terms of biological role, involved in the TCA cycle. Catalyzes the stereospecific interconversion of fumarate to L-malate. The protein is Fumarate hydratase class II of Methylorubrum extorquens (strain ATCC 14718 / DSM 1338 / JCM 2805 / NCIMB 9133 / AM1) (Methylobacterium extorquens).